Consider the following 86-residue polypeptide: Large ribosomal subunit protein bL27 (86 aa).

Gly residues predominate over residues 1 to 10 (MAQKKGGGST). The interval 1–22 (MAQKKGGGSTRNGRDSESKRLG) is disordered.

The protein belongs to the bacterial ribosomal protein bL27 family.

The chain is Large ribosomal subunit protein bL27 from Polynucleobacter asymbioticus (strain DSM 18221 / CIP 109841 / QLW-P1DMWA-1) (Polynucleobacter necessarius subsp. asymbioticus).